The primary structure comprises 353 residues: Uroporphyrinogen decarboxylase (353 aa).

Residues 27–31 (RQAGR), Phe-46, Asp-76, Tyr-152, Ser-207, and His-321 contribute to the substrate site.

This sequence belongs to the uroporphyrinogen decarboxylase family. In terms of assembly, homodimer.

It localises to the cytoplasm. The catalysed reaction is uroporphyrinogen III + 4 H(+) = coproporphyrinogen III + 4 CO2. It functions in the pathway porphyrin-containing compound metabolism; protoporphyrin-IX biosynthesis; coproporphyrinogen-III from 5-aminolevulinate: step 4/4. Its function is as follows. Catalyzes the decarboxylation of four acetate groups of uroporphyrinogen-III to yield coproporphyrinogen-III. The sequence is that of Uroporphyrinogen decarboxylase from Listeria monocytogenes serotype 4b (strain F2365).